The following is a 453-amino-acid chain: Nuclear and cytoplasmic polyadenylated RNA-binding protein PUB1 (453 aa).

Residues 1-67 form a disordered region; sequence MSENNEEQHQ…PSVVPANAIT (67 aa). Ser-2 carries the post-translational modification N-acetylserine. RRM domains are found at residues 75–152 and 162–240; these read RVLY…WAFQ and FNLF…WAAK. Residues 241-262 are disordered; sequence RDNNNNNNYQQRRNYGNNNRGG. The segment covering 244 to 262 has biased composition (low complexity); sequence NNNNNYQQRRNYGNNNRGG. Omega-N-methylarginine is present on Arg-260. An RNA-binding RGG-box region spans residues 260-264; that stretch reads RGGFR. Residues 341-413 form the RRM 3 domain; the sequence is TTAYIGNIPH…RNLRTGWGKE (73 aa). The segment at 419 to 453 is disordered; the sequence is PQQQQQGGQPLIMNDQQQPVMSEQQQQQQQQQQQQ. Positions 434 to 453 are enriched in low complexity; sequence QQQPVMSEQQQQQQQQQQQQ.

In terms of assembly, interacts with NAB2.

The protein resides in the cytoplasm. Its subcellular location is the nucleus. It localises to the P-body. It is found in the stress granule. May be associated with hnRNA within the nucleus and remains associated during nucleocytoplasmic mRNA transport, once the proteins are in the cytoplasm, disassembly of PUB1-RNA complexes may occur prior to PAB1 binding and formation of a translationally competent RNP complex. Binds to polyadenylated RNA; prefers to bind poly(rU); binds to T-rich single-stranded DNA. This Saccharomyces cerevisiae (strain ATCC 204508 / S288c) (Baker's yeast) protein is Nuclear and cytoplasmic polyadenylated RNA-binding protein PUB1.